Reading from the N-terminus, the 185-residue chain is Elongation factor P (185 aa).

The protein belongs to the elongation factor P family.

Its subcellular location is the cytoplasm. It functions in the pathway protein biosynthesis; polypeptide chain elongation. Functionally, involved in peptide bond synthesis. Stimulates efficient translation and peptide-bond synthesis on native or reconstituted 70S ribosomes in vitro. Probably functions indirectly by altering the affinity of the ribosome for aminoacyl-tRNA, thus increasing their reactivity as acceptors for peptidyl transferase. The chain is Elongation factor P from Desulfitobacterium hafniense (strain Y51).